Reading from the N-terminus, the 258-residue chain is Isoprenyl transferase (258 aa).

The active site involves Asp24. Residue Asp24 participates in Mg(2+) binding. Substrate is bound by residues 25–28, Trp29, Arg37, His41, and 69–71; these read GNGR and SSE. The active-site Proton acceptor is the Asn72. Substrate is bound by residues Trp73, Arg75, Arg190, and 196 to 198; that span reads RIS. Glu209 is a binding site for Mg(2+).

Belongs to the UPP synthase family. As to quaternary structure, homodimer. Requires Mg(2+) as cofactor.

Catalyzes the condensation of isopentenyl diphosphate (IPP) with allylic pyrophosphates generating different type of terpenoids. In Ralstonia nicotianae (strain ATCC BAA-1114 / GMI1000) (Ralstonia solanacearum), this protein is Isoprenyl transferase.